We begin with the raw amino-acid sequence, 1262 residues long: DNA-directed RNA polymerase subunit beta' (1262 aa).

Residues cysteine 220, cysteine 294, cysteine 301, and cysteine 304 each coordinate Zn(2+).

This sequence belongs to the RNA polymerase beta' chain family. RpoC2 subfamily. In terms of assembly, in cyanobacteria the RNAP catalytic core is composed of 2 alpha, 1 beta, 1 beta', 1 gamma and 1 omega subunit. When a sigma factor is associated with the core the holoenzyme is formed, which can initiate transcription. It depends on Zn(2+) as a cofactor.

The enzyme catalyses RNA(n) + a ribonucleoside 5'-triphosphate = RNA(n+1) + diphosphate. Functionally, DNA-dependent RNA polymerase catalyzes the transcription of DNA into RNA using the four ribonucleoside triphosphates as substrates. This is DNA-directed RNA polymerase subunit beta' from Gloeobacter violaceus (strain ATCC 29082 / PCC 7421).